A 300-amino-acid chain; its full sequence is Acetaldehyde dehydrogenase 3 (300 aa).

11 to 14 (SGNI) provides a ligand contact to NAD(+). C126 acts as the Acyl-thioester intermediate in catalysis. Residues 157-165 (SAGPGTRAN) and N276 contribute to the NAD(+) site.

Belongs to the acetaldehyde dehydrogenase family.

It catalyses the reaction acetaldehyde + NAD(+) + CoA = acetyl-CoA + NADH + H(+). The sequence is that of Acetaldehyde dehydrogenase 3 (hsaG) from Rhodococcus jostii (strain RHA1).